A 335-amino-acid polypeptide reads, in one-letter code: Transaldolase (335 aa).

Lys135 acts as the Schiff-base intermediate with substrate in catalysis.

The protein belongs to the transaldolase family. Type 1 subfamily. As to quaternary structure, homodimer.

The protein localises to the cytoplasm. The enzyme catalyses D-sedoheptulose 7-phosphate + D-glyceraldehyde 3-phosphate = D-erythrose 4-phosphate + beta-D-fructose 6-phosphate. It functions in the pathway carbohydrate degradation; pentose phosphate pathway; D-glyceraldehyde 3-phosphate and beta-D-fructose 6-phosphate from D-ribose 5-phosphate and D-xylulose 5-phosphate (non-oxidative stage): step 2/3. Transaldolase is important for the balance of metabolites in the pentose-phosphate pathway. This Prochlorococcus marinus (strain SARG / CCMP1375 / SS120) protein is Transaldolase.